The chain runs to 197 residues: Auxin-responsive protein IAA31 (197 aa).

Disordered regions lie at residues 1–43 (MENL…DQAK) and 66–90 (SCLQ…ETQQ). The short motif at 9–13 (LRLGL) is the EAR-like (transcriptional repression) element. Residues 99–186 (GLFVKVSMDG…TCKRLRIMKG (88 aa)) form the PB1 domain.

This sequence belongs to the Aux/IAA family. Homodimers and heterodimers. As to expression, highly expressed in etiolated seedlings. Expressed in roots.

The protein resides in the nucleus. Aux/IAA proteins are short-lived transcriptional factors that function as repressors of early auxin response genes at low auxin concentrations. This chain is Auxin-responsive protein IAA31 (IAA31), found in Oryza sativa subsp. japonica (Rice).